A 143-amino-acid chain; its full sequence is Large ribosomal subunit protein uL15 (143 aa).

Residues 1–52 (MKLNTLAPAAGSKSAPKRLGRGIGSGLGKTSGKGHKGQKARSGGYHKVGFEG) are disordered. The span at 21 to 31 (RGIGSGLGKTS) shows a compositional bias: gly residues.

The protein belongs to the universal ribosomal protein uL15 family. In terms of assembly, part of the 50S ribosomal subunit.

Binds to the 23S rRNA. In Francisella tularensis subsp. novicida (strain U112), this protein is Large ribosomal subunit protein uL15.